We begin with the raw amino-acid sequence, 61 residues long: UPF0391 membrane protein Pnap_0032 (61 aa).

The next 2 membrane-spanning stretches (helical) occupy residues 5 to 25 (AIIF…GVAA) and 33 to 53 (VLFG…ALGV).

This sequence belongs to the UPF0391 family.

The protein resides in the cell membrane. The protein is UPF0391 membrane protein Pnap_0032 of Polaromonas naphthalenivorans (strain CJ2).